The primary structure comprises 367 residues: NADH-ubiquinone oxidoreductase chain 1 (367 aa).

A run of 10 helical transmembrane segments spans residues 5–25 (IIISLIEVVLVLVPALLGIAY), 43–63 (PNFVGYYGLLQAFADALKLLL), 74–94 (IILFFLGPVITLIFSLLGYAV), 108–128 (LGIYYILAVSSLATYGILLAG), 152–172 (LVLSSAILLVIMLTGSLNLSV), 179–199 (AIWNIFPLLPVFIIFFIGSVA), 225–245 (AVVFVFFFLAEYGSIVLMCIL), 265–285 (FFYSILFNIGFIDLNFFNIFY), 301–321 (LIYGLTIGLKSSILIFLFIWV), and 336–356 (FCWTVLLPLLFALIVLLPCIL).

This sequence belongs to the complex I subunit 1 family.

The protein localises to the mitochondrion inner membrane. The catalysed reaction is a ubiquinone + NADH + 5 H(+)(in) = a ubiquinol + NAD(+) + 4 H(+)(out). Core subunit of the mitochondrial membrane respiratory chain NADH dehydrogenase (Complex I) that is believed to belong to the minimal assembly required for catalysis. Complex I functions in the transfer of electrons from NADH to the respiratory chain. The immediate electron acceptor for the enzyme is believed to be ubiquinone. In Podospora anserina (strain S / ATCC MYA-4624 / DSM 980 / FGSC 10383) (Pleurage anserina), this protein is NADH-ubiquinone oxidoreductase chain 1 (ND1).